Here is a 659-residue protein sequence, read N- to C-terminus: Homeobox protein slou (659 aa).

Residues Met1 to Ala21 are compositionally biased toward polar residues. Disordered regions lie at residues Met1–Lys63, Met94–Ser152, Ala198–Ser298, Thr316–Arg349, Gln376–Ala440, and Pro455–Ala548. Low complexity-rich tracts occupy residues Ser27–Ser51, Ser95–Leu108, and His120–Thr135. A compositionally biased stretch (polar residues) spans Arg136–Ser152. Over residues His201–Pro232 the composition is skewed to basic residues. 7 repeat units span residues His221–Pro222, His223–Pro224, His225–Pro226, His227–Pro228, His229–Pro230, His231–Pro232, and His233–Pro234. A 7 X 2 AA tandem repeats of H-P region spans residues His221 to Pro234. 2 stretches are compositionally biased toward pro residues: residues Pro250–Ser263 and Pro275–Ser286. Low complexity-rich tracts occupy residues Gln287–Ser298 and Thr316–Ser347. Residues Ser388–Asn401 show a composition bias toward acidic residues. The segment covering Arg417–Ser435 has biased composition (low complexity). 2 stretches are compositionally biased toward acidic residues: residues Arg478–Glu492 and Asn500–Ser519. A compositionally biased stretch (gly residues) spans Ser528–Ser543. A DNA-binding region (homeobox) is located at residues Pro545–Asn604.

This sequence belongs to the NK-1 homeobox family. In terms of tissue distribution, mesodermal precursor cells of distinct muscles during embryogenesis, a subset of neuronal cells of the CNS and their precursors and also in cells of a small region of the midgut.

Its subcellular location is the nucleus. May play a role in specifying the identity of particular somatic muscles and neurons of the CNS. The protein is Homeobox protein slou (slou) of Drosophila melanogaster (Fruit fly).